A 212-amino-acid chain; its full sequence is Pyrrolidone-carboxylate peptidase (212 aa).

Active-site residues include Glu78, Cys141, and His165.

The protein belongs to the peptidase C15 family. As to quaternary structure, homotetramer.

It localises to the cytoplasm. The enzyme catalyses Release of an N-terminal pyroglutamyl group from a polypeptide, the second amino acid generally not being Pro.. Its function is as follows. Removes 5-oxoproline from various penultimate amino acid residues except L-proline. This is Pyrrolidone-carboxylate peptidase from Staphylococcus haemolyticus (strain JCSC1435).